The following is a 285-amino-acid chain: Probable cobalamin biosynthesis protein CobD (285 aa).

4 helical membrane-spanning segments follow: residues 10 to 32 (LIDLMFGEPPAIIHPVVGFGKVI), 45 to 67 (YLDFLVGAISSLVVIGLAFILSH), 145 to 167 (VIAPLFYYLIFGLPGAVVYRAVN), and 266 to 283 (VYWIIVVEFLLIVAIILY).

The protein belongs to the CobD/CbiB family.

The protein localises to the cell membrane. The protein operates within cofactor biosynthesis; adenosylcobalamin biosynthesis. Functionally, converts cobyric acid to cobinamide by the addition of aminopropanol on the F carboxylic group. In Pyrococcus furiosus (strain ATCC 43587 / DSM 3638 / JCM 8422 / Vc1), this protein is Probable cobalamin biosynthesis protein CobD.